The chain runs to 407 residues: E3 ubiquitin-protein ligase TRIM13 (407 aa).

The RING-type zinc finger occupies 10-58; sequence CPICCSLFDDPRVLPCSHNFCKKCLEGILEGSVRNSLWRPAPFKCPTCR. The B box-type zinc-finger motif lies at 89-131; sequence PKMPVCKGHLGQPLNIFCLTDMQLICGICATRGEHTKHVFCSI. Cysteine 94, histidine 97, cysteine 117, and histidine 123 together coordinate Zn(2+). Positions 172–200 form a coiled coil; it reads LQLLTKDSDKVKEFFEKLQHTLDQKKNEI. Residues 317–337 form a helical membrane-spanning segment; it reads LFLLILLLGLVIVFGPTMFLE.

It belongs to the TRIM/RBCC family. In terms of assembly, interacts (via C-terminal domain) with VCP. Interacts with AKT1; the interaction ubiquitinates AKT1 and leads to its proteasomal degradation. Interacts with MDM2; the interaction ubiquitinates AKT1 and leads to its proteasomal degradation. Interacts with p62/SQSTM1. Interacts with TRAF6. Interacts with IKBKG/NEMO. Auto-ubiquitinated; requires the RING-type zinc finger. Auto-polyubiquitination leads to proteasomal degradation.

It is found in the endoplasmic reticulum membrane. It catalyses the reaction S-ubiquitinyl-[E2 ubiquitin-conjugating enzyme]-L-cysteine + [acceptor protein]-L-lysine = [E2 ubiquitin-conjugating enzyme]-L-cysteine + N(6)-ubiquitinyl-[acceptor protein]-L-lysine.. It participates in protein modification; protein ubiquitination. Its function is as follows. Endoplasmic reticulum (ER) membrane anchored E3 ligase involved in the retrotranslocation and turnover of membrane and secretory proteins from the ER through a set of processes named ER-associated degradation (ERAD). This process acts on misfolded proteins as well as in the regulated degradation of correctly folded proteins. Enhances ionizing radiation-induced p53/TP53 stability and apoptosis via ubiquitinating MDM2 and AKT1 and decreasing AKT1 kinase activity through MDM2 and AKT1 proteasomal degradation. Regulates ER stress-induced autophagy, and may act as a tumor suppressor. Also plays a role in innate immune response by stimulating NF-kappa-B activity in the TLR2 signaling pathway. Ubiquitinates TRAF6 via the 'Lys-29'-linked polyubiquitination chain resulting in NF-kappa-B activation. Participates as well in T-cell receptor-mediated NF-kappa-B activation. In the presence of TNF, modulates the IKK complex by regulating IKBKG/NEMO ubiquitination leading to the repression of NF-kappa-B. The protein is E3 ubiquitin-protein ligase TRIM13 (TRIM13) of Homo sapiens (Human).